The following is a 144-amino-acid chain: Transcription antitermination protein NusB (144 aa).

This sequence belongs to the NusB family.

Its function is as follows. Involved in transcription antitermination. Required for transcription of ribosomal RNA (rRNA) genes. Binds specifically to the boxA antiterminator sequence of the ribosomal RNA (rrn) operons. This chain is Transcription antitermination protein NusB, found in Pasteurella multocida (strain Pm70).